We begin with the raw amino-acid sequence, 832 residues long: MSCPPTPNPPFRPPSHTRVLRTPPLPPWVCLNSKSLSTGVGGQKNQLREASMENGERKKLSSTLSDGDHKEENKLKQGIPQDLSSSPKLDRYKIARQLTEKAIKERKIFSIYGHYPVIRATLRRKGWVEKKFNFFPKALQNLGSEDKSAETKENQEIALERFDDIHDVMSRLVKNEIPYLLWTIKRDVVDYHSLTCDQMLNHYGKTASFTTKIGLCLNMRSLPWYVQANPNTFFPRCYGLCTESEKQEFLDDFRRTVAASILKWVVLHQNYCSKVKGKSKKEEAKNSDPSPKKDPENPDLKLPSLSGQVVDTACKVCQAYLGQLEHEDIDVSEASTEALSEEEWNDLTQQYYLLVHGNASITDSKSYFAQCQALLSKISSVNPQTEIDGIRNIWIIKPAAKSRGRDIVCMDRVENILSLVAADSQTTKDNKWVVQKYIETPMLIYDTKFDIRQWFLVTDWNPLTIWFYKESYLRFSTQRFSLDKLDSAIHLCNNSIQRRLKNDKERSPLLPCHNMWTSTRFQEYLQKRGRGGTWGSIIYPSMKRAVTNAMRVAQDHVEARKNSFELYGADFILGRDFKPWLIEINSSPTMHPSTPVTAQLCAQVQEDTIKVVVDRKLDRNCDIGNFELLWRQPAVELPPFNGSDLCVEGISVKKAKKQMPPIASVGLSESLLDAPPKVRSARALMETVIRPPRTTVRQDWKREEAKVLSTTWSMPVMDAEVRGRAKPIYAFEVNDYQHVDNKSHKSGYTRVQSSKVPGVTLTSAQHPALFAQTMKPTQMTSSPPPTASGNHRDSSPFCPIVFEELWLHPNSQRRPSSCILQSRAQGWIRGIP.

Positions M1 to P13 are enriched in pro residues. Disordered regions lie at residues M1–S84 and G277–S304. Composition is skewed to basic and acidic residues over residues Q46–K59, D66–L75, and K280–D299. The TTL domain maps to Y271–G624. Residues K397, R403–G404, Q435–I438, K448–D450, and C492–N493 contribute to the ATP site. R403 is a binding site for a protein. S495 contacts L-glutamate. Mg(2+) contacts are provided by D570, E583, and N585. Residue E583 coordinates ATP.

Mg(2+) serves as cofactor. As to expression, highly expressed in testis. Expressed in brain, heart, kidney, liver, lung, muscle, spleen and trachea. Expressed in sperm flagellum. In the brain, specifically expressed in ependymal cilia.

The protein localises to the cytoplasm. It localises to the cytoskeleton. The protein resides in the cell projection. Its subcellular location is the cilium. It is found in the cilium axoneme. The protein localises to the flagellum axoneme. It catalyses the reaction L-glutamyl-[protein] + glycine + ATP = glycyl-L-glutamyl-[protein] + ADP + phosphate + H(+). Its function is as follows. Monoglycylase which modifies both tubulin and non-tubulin proteins, adding a single glycine on the gamma-carboxyl groups of specific glutamate residues to generate monoglycine side chains within the C-terminal tail of target proteins. Not involved in elongation step of the polyglycylation reaction. Preferentially monoglycylates alpha-tubulin over beta-tubulin. Together with TTLL3, mediates microtubule glycylation of primary and motile cilia, which is essential for their stability and maintenance. Together with TTLL3, glycylates sperm flagella which regulates axonemal dynein motor activity, thereby controlling flagellar beat, directional sperm swimming and male fertility. Monoglycylates non-tubulin proteins such as ANP32A, ANP32B, SET, NCL and NAP1. This Mus musculus (Mouse) protein is Protein monoglycylase TTLL8.